The sequence spans 542 residues: Probable quinate permease (542 aa).

Residues 1–22 are Cytoplasmic-facing; sequence MSILALVEDRPTPKEVYNWRIY. The helical transmembrane segment at 23-43 threads the bilayer; sequence LLAAVASFTSCMIGYDSAFIG. At 44-66 the chain is on the extracellular side; it reads TTLALSSFREEFGFNTMSKTAVN. A helical membrane pass occupies residues 67–87; sequence LVSANIVSCYQAGAFFGAFLA. Residues 88–97 are Cytoplasmic-facing; it reads YPVGHFWGRK. A helical transmembrane segment spans residues 98–118; it reads WGLLFSGAIFTLGAGLMLGAD. Over 119–130 the chain is Extracellular; it reads GDRGLGLLYGGR. A helical transmembrane segment spans residues 131–151; the sequence is VLAGLGVGAGSNITPIYISEM. The Cytoplasmic portion of the chain corresponds to 152-159; the sequence is APPSIRGR. The helical transmembrane segment at 160–180 threads the bilayer; the sequence is LVGVYELGWQIGGLVGFWINY. Residues 181–193 are Extracellular-facing; that stretch reads GVSETLAPSHKQW. The helical transmembrane segment at 194–214 threads the bilayer; sequence IIPFAVQLIPSGLLLIGAVFL. Over 215–285 the chain is Cytoplasmic; the sequence is KESPRWLFSR…AGTNKKVMYR (71 aa). A helical transmembrane segment spans residues 286 to 306; sequence LFLGSMLFFWQNGSGINAINY. The Extracellular portion of the chain corresponds to 307-325; it reads YSPTVFKSIGLQGANTSMF. The helical transmembrane segment at 326-346 threads the bilayer; sequence STGIFGVVKTVVTFVWLLYLI. Over 347-352 the chain is Cytoplasmic; the sequence is DRLGRR. The chain crosses the membrane as a helical span at residues 353–373; sequence LLLLIGAAGASVCLFIVGAYI. Over 374-387 the chain is Extracellular; the sequence is KIADPASNPTQEMT. A helical membrane pass occupies residues 388–408; that stretch reads GGGIAAMFFFYLYTVFYTPSW. The Cytoplasmic portion of the chain corresponds to 409 to 456; it reads NGTPWVMNSEMFEPNMRSLAQACAAASNWFWNFLISRFTPQMFAKMEY. The chain crosses the membrane as a helical span at residues 457–477; that stretch reads GVWFFFASLMVLSIVFVFFLL. The Extracellular portion of the chain corresponds to 478–542; that stretch reads PETKGIPLES…EHLSEDLPKV (65 aa). The tract at residues 519-542 is disordered; it reads IEESGYSKTGDQQVEHLSEDLPKV. Residues 531–542 are compositionally biased toward basic and acidic residues; sequence QVEHLSEDLPKV.

The protein belongs to the major facilitator superfamily. Sugar transporter (TC 2.A.1.1) family. As to quaternary structure, interacts with creB. Post-translationally, ubiquitinated. Deubiquitinated by creB, probably to control its activity or amount.

The protein resides in the cell membrane. In terms of biological role, integral membrane transporter that imports quinic acid to be catabolized as a carbon source. The protein is Probable quinate permease (qutD) of Neosartorya fischeri (strain ATCC 1020 / DSM 3700 / CBS 544.65 / FGSC A1164 / JCM 1740 / NRRL 181 / WB 181) (Aspergillus fischerianus).